The primary structure comprises 190 residues: Thioredoxin F-type, chloroplastic (190 aa).

The interval 1-31 (MALHLSLSHQSWTSPAHPITSSDPTRSSVPG) is disordered. A chloroplast-targeting transit peptide spans 1–77 (MALHLSLSHQ…SMEQALGTQE (77 aa)). The span at 7–30 (LSHQSWTSPAHPITSSDPTRSSVP) shows a compositional bias: polar residues. One can recognise a Thioredoxin domain in the interval 78–189 (MEAIVGKVTE…LLEAIQAARS (112 aa)). Residues Cys-114 and Cys-117 each act as nucleophile in the active site. Residues Cys-114 and Cys-117 are joined by a disulfide bond.

This sequence belongs to the thioredoxin family. Plant F-type subfamily. As to quaternary structure, forms a complex with heterodimeric ferredoxin-thioredoxin reductase (FTR) and ferredoxin.

The protein resides in the plastid. Its subcellular location is the chloroplast. Participates in various redox reactions through the reversible oxidation of the active center dithiol to a disulfide. The F form is known to activate a number of enzymes of the photosynthetic carbon cycle. The protein is Thioredoxin F-type, chloroplastic of Spinacia oleracea (Spinach).